A 201-amino-acid chain; its full sequence is Ras-related protein Rab-10 (201 aa).

16–23 (GDSGVGKT) lines the GTP pocket. The short motif at 38–46 (FISTIGIDF) is the Effector region element. Residues 64–68 (DTAGQ), 122–125 (NKCD), and 152–154 (SAK) each bind GTP. Positions 175-201 (PDSTDEQSRDTVNPVQPQRQSSSGGCC) are disordered. Polar residues predominate over residues 184–201 (DTVNPVQPQRQSSSGGCC). 2 S-geranylgeranyl cysteine lipidation sites follow: C200 and C201.

This sequence belongs to the small GTPase superfamily. Rab family. In terms of assembly, interacts (GTP-bound form) with ehbp-1 (via C-terminal coiled coil). Interacts (GTP-bound form) with cnt-1 (via C-terminal ankyrin repeat). Interacts (GTP-bound form) with rab-5 GAP, tbc-2 (via putative coiled coil domain). Interacts (GTP-bound form) with amph-1. In terms of tissue distribution, almost ubiquitously expressed. Expressed in intestine, hypodermis, seam cells, body-wall muscles, many neurons, oviduct sheath cell, spermatheca, coelomocytes and pharyngeal and nerve ring.

It is found in the early endosome membrane. It localises to the late endosome membrane. Its subcellular location is the golgi apparatus membrane. The protein localises to the endosome membrane. It carries out the reaction GTP + H2O = GDP + phosphate + H(+). With respect to regulation, rab activation is generally mediated by a guanine exchange factor (GEF), while inactivation through hydrolysis of bound GTP is catalyzed by a GTPase activating protein (GAP). Tbc-4 is a likely GAP of this rab. Denn-4 is a putative GEF of this rab. Functionally, the small GTPases Rab are key regulators of intracellular membrane trafficking, from the formation of transport vesicles to their fusion with membranes. Rabs cycle between an inactive GDP-bound form and an active GTP-bound form that is able to recruit to membranes different set of downstream effectors directly responsible for vesicle formation, movement, tethering and fusion. Required for basolateral endocytic recycling, the return of macromolecules and fluid from endosomes to the plasma membrane, in polarized epithelial cells of the intestine upstream of rme-1. Involved in the formation of the endosomal tubular network that is required for basolateral recycling of clathrin-independent endocytic cargo such as daf-4 in the intestine. Required for the recruitment of cnt-1 effector to endosomal membranes in the intestinal epithelium, which is important for the regulation of levels of endosomal phosphatidylinositol-4,5-bisphosphate, a key phosphoinositide in membrane traffic, and for the recruitment of endosomal membrane-bending proteins, rme-1 and sdpn-1. Recruits the rab-5 GTPase-activating protein tbc-2 to endosomes where it then inactivates rab-5 resulting in removal of rab-5 from membranes, which is necessary for cargo transport from early endosomes to recycling endosomes in the basolateral intestine. Regulates recycling of synaptic membrane AMPA glutamate receptor, glr-1, from intracellular endosomal compartments back to synapses in a cholesterol-dependent endocytosis pathway functioning after clathrin-independent endocytosis in command interneurons. Regulates neuropeptide release from dense core vesicles (DCVs) of cholinergic motoneurons in cooperation with rab-5. They reciprocally recruit each other's inactivating GAP molecule leading to local exclusion of one or the other rab protein at the Golgi-endosomal interphase at an essential stage during DCV sorting. Regulates membrane trafficking of membranes and dendrite proteins from the Golgi and/or endosomal compartments to plasma membrane during dendrite morphogenesis together with the exocyst complex in the multi-dendritic PVD sensory neurons acting in a cell-autonomous manner and requiring its GTPase activity. Functions cell-autonomously together with the exocyst complex to regulate dendrite morphogenesis and anterior-posterior patterning of the PVD neurons dendritic arbor by balancing the anterograde and retrograde transport via molecular motors unc-116 (kinesin heavy chain) and dhc-1 (dynein heavy chain) to appropriately transport branching factors, such as dma-1, to the specific subcellular regions of the developing dendrite in its GTPase activity-dependent manner. The protein is Ras-related protein Rab-10 of Caenorhabditis elegans.